Here is a 393-residue protein sequence, read N- to C-terminus: Adaptive-response sensory kinase SasA (393 aa).

The Histidine kinase domain maps to 171 to 393 (MLAHDLRSPL…CFHFTLPVFR (223 aa)). Phosphohistidine; by autocatalysis is present on H174.

Homooligomerizes. Interacts with KaiC. Participates in the KaiABC clock complex, whose core is composed of a KaiC homohexamer, 6 KaiB and up to 6 KaiA dimers. SasA and KaiB(fs) compete to bind to KaiC.

The enzyme catalyses ATP + protein L-histidine = ADP + protein N-phospho-L-histidine.. Functionally, member of the two-component regulatory system SasA/RpaA involved in genome-wide circadian gene expression. One of several clock output pathways. Participates in the Kai clock protein complex, the main circadian regulator in cyanobacteria, via its interaction with KaiC. KaiC enhances the autophosphorylation activity of SasA, which then transfers its phosphate group to RpaA to activate it. In addition to its output function, recruits fold-shifted KaiB (KaiB(fs)) to KaiC to cooperatively form the KaiB(6):KaiC(6) complex (independent of SasA kinase activity). Required for robustness of the circadian rhythm of gene expression and is involved in clock output, also required for adaptation to light/dark cycles. This is Adaptive-response sensory kinase SasA from Gloeothece citriformis (strain PCC 7424) (Cyanothece sp. (strain PCC 7424)).